Consider the following 236-residue polypeptide: Small ribosomal subunit protein uS2c (236 aa).

Belongs to the universal ribosomal protein uS2 family.

Its subcellular location is the plastid. It is found in the chloroplast. This Chaetosphaeridium globosum (Charophycean green alga) protein is Small ribosomal subunit protein uS2c (rps2).